The sequence spans 4011 residues: Hybrid PKS-NRPS synthetase mycA (4011 aa).

Residues 12–451 (NEPIAIIGSA…GANAHVILEN (440 aa)) enclose the Ketosynthase family 3 (KS3) domain. Residues Cys185, His324, and His373 each act as for beta-ketoacyl synthase activity in the active site. An acyl transferase (AT) domain region spans residues 576–903 (VFTGQGAQWA…PYTGTLSRGS (328 aa)). The tract at residues 977–1113 (NPLLGRRIPD…GRVIVTLAGT (137 aa)) is N-terminal hotdog fold. The 314-residue stretch at 977–1290 (NPLLGRRIPD…ITPLATRTGQ (314 aa)) folds into the PKS/mFAS DH domain. The tract at residues 978–1287 (PLLGRRIPDG…GVRITPLATR (310 aa)) is dehydratase (DH) domain. Residue His1009 is the Proton acceptor; for dehydratase activity of the active site. The C-terminal hotdog fold stretch occupies residues 1135 to 1290 (TAEVREDEFY…ITPLATRTGQ (156 aa)). Catalysis depends on Asp1195, which acts as the Proton donor; for dehydratase activity. The interval 1434-1626 (YYVEALGIRE…FSGIDTITPE (193 aa)) is methyltransferase (MT) domain. The ketoreductase (KR)domain stretch occupies residues 2138-2311 (TYVLFGLTSD…AASVLHLGAV (174 aa)). Residues 2429-2504 (DSFLQKLQIM…DLVAFAHEKL (76 aa)) form the Carrier 1 domain. An O-(pantetheine 4'-phosphoryl)serine modification is found at Ser2464. Residues 2519 to 2607 (AAAAAAAERS…PREQDVERTA (89 aa)) form a disordered region. Polar residues predominate over residues 2559-2578 (PASSSTGSDHPTSVTSSGHT). Residues 2604–2975 (ERTAPMSLGQ…KPDSTLGSAP (372 aa)) form a condensation region. Positions 3009–3414 (IIQRNPDTIA…GELEILGRID (406 aa)) are adenylation. Residues 3525-3544 (AKEEEEEKRPNGSSAAPLTQ) are disordered. The segment covering 3535-3544 (NGSSAAPLTQ) has biased composition (polar residues). A Carrier 2 domain is found at 3541 to 3621 (PLTQQELQLR…AMAAAVHDAA (81 aa)). Residue Ser3581 is modified to O-(pantetheine 4'-phosphoryl)serine. The reductase-like stretch occupies residues 3671–3978 (VVILTGATGF…RTVPLGQWIE (308 aa)).

It in the C-terminal section; belongs to the NRP synthetase family.

The enzyme catalyses L-leucine + 8 malonyl-CoA + 4 S-adenosyl-L-methionine + ATP + 9 NADPH + 12 H(+) = (5S)-5-(2-methylpropyl)-3-[(2E,6R,8E,10E,12E)-6,8,10,12-tetramethyltetradeca-2,8,10,12-tetraenoyl]-2,5-dihydro-1H-pyrrol-2-one + AMP + 4 S-adenosyl-L-homocysteine + 8 CO2 + diphosphate + 9 NADP(+) + 8 CoA + 7 H2O. It functions in the pathway mycotoxin biosynthesis. Functionally, hybrid PKS-NRPS synthetase; part of the gene cluster that mediates the biosynthesis of myceliothermophins, mycotoxins that contain a trans-fused decalin ring system connected to a conjugated 3-pyrrolin-2-one moiety and that have potential anti-tumor properties. The polyketide synthase module (PKS) of the PKS-NRPS mycA is responsible for the synthesis of the octaketide backbone. The downstream nonribosomal peptide synthetase (NRPS) module then amidates the carboxyl end of the octaketide with a leucine. A reductase-like domain (R) at the C-terminus catalyzes the reductive release of the polyketide-amino acid intermediate. Because mycA lacks a designated enoylreductase (ER) domain, the required activity is provided the enoyl reductase mycC. Following mycA-catalyzed construction and release of aminoacyl polyketide aldehyde, Knoevenagel condensation yields the expected ketone. This C18 keto acyclic precursor is the substrate of the Diels-Alderase mycB, that catalyzes the Diels-Alder cycloaddition to produce myceliothermophin E. A yet unknown oxygenase involved in the production of myceliothermophin A, via substitution with a hydroxyl group at the C21, has still to be identified. In Thermothelomyces thermophilus (strain ATCC 42464 / BCRC 31852 / DSM 1799) (Sporotrichum thermophile), this protein is Hybrid PKS-NRPS synthetase mycA.